An 87-amino-acid chain; its full sequence is Cell division topological specificity factor (87 aa).

Belongs to the MinE family.

Prevents the cell division inhibition by proteins MinC and MinD at internal division sites while permitting inhibition at polar sites. This ensures cell division at the proper site by restricting the formation of a division septum at the midpoint of the long axis of the cell. The chain is Cell division topological specificity factor from Vibrio vulnificus (strain CMCP6).